The primary structure comprises 718 residues: Glycine--tRNA ligase beta subunit (718 aa).

Belongs to the class-II aminoacyl-tRNA synthetase family. In terms of assembly, tetramer of two alpha and two beta subunits.

Its subcellular location is the cytoplasm. The catalysed reaction is tRNA(Gly) + glycine + ATP = glycyl-tRNA(Gly) + AMP + diphosphate. This chain is Glycine--tRNA ligase beta subunit, found in Mesorhizobium japonicum (strain LMG 29417 / CECT 9101 / MAFF 303099) (Mesorhizobium loti (strain MAFF 303099)).